The following is a 615-amino-acid chain: Lipoprotein LpqB (615 aa).

The N-terminal stretch at 1–29 is a signal peptide; it reads MGADRGRGGRRRPARVVAYAVGGVVLLAG. Cysteine 30 is lipidated: N-palmitoyl cysteine. Cysteine 30 is lipidated: S-diacylglycerol cysteine. The disordered stretch occupies residues 100-123; that stretch reads PDESATVLAGGPGTESDHSGNRED. The span at 114–123 shows a compositional bias: basic and acidic residues; sequence ESDHSGNRED.

Belongs to the LpqB lipoprotein family.

Its subcellular location is the cell membrane. The chain is Lipoprotein LpqB from Streptomyces coelicolor (strain ATCC BAA-471 / A3(2) / M145).